Consider the following 543-residue polypeptide: Limonene hydroxylase (543 aa).

Positions 232 to 464 (VVTYNPSFEK…LRNVIERAFL (233 aa)) constitute a Sigma-54 factor interaction domain. Residues 260-267 (GETGSGKE) and 324-333 (ADGGTLFLDE) contribute to the ATP site.

It catalyses the reaction (4S)-limonene + reduced [NADPH--hemoprotein reductase] + O2 = (1S,5R)-carveol + oxidized [NADPH--hemoprotein reductase] + H2O + H(+). The catalysed reaction is (4S)-limonene + reduced [NADPH--hemoprotein reductase] + O2 = (4S)-perillyl alcohol + oxidized [NADPH--hemoprotein reductase] + H2O + H(+). The enzyme catalyses perillyl alcohol + NAD(+) = perillyl aldehyde + NADH + H(+). It carries out the reaction (1S,5R)-carveol + NADP(+) = (R)-carvone + NADPH + H(+). Its function is as follows. Involved in limonene hydroxylation to a mixture of carveol and perillyl alcohol as well as in dehydrogenation of these products to carvone and perillyl aldehyde. Aromatic alcohols containing an isopropyl or isopropenyl group at ring position 4 also served as substrates for the dehydrogenase activity. This is Limonene hydroxylase from Geobacillus stearothermophilus (Bacillus stearothermophilus).